A 182-amino-acid polypeptide reads, in one-letter code: Lipoprotein signal peptidase (182 aa).

The next 4 membrane-spanning stretches (helical) occupy residues 15 to 35 (LYIGVIFLGIILDLVTKFLVI), 44 to 64 (LEVLGSFFRMTLTFNTGFVFG), 65 to 85 (AFQDNAIPSLIATGIAIVFLI), and 97 to 117 (PWGWNLVMAGAFGNFLDKFFV). Active-site residues include D140 and D162. The chain crosses the membrane as a helical span at residues 155–175 (WPAFNVADSCVTIGLTILIFT).

It belongs to the peptidase A8 family.

The protein resides in the cell inner membrane. The enzyme catalyses Release of signal peptides from bacterial membrane prolipoproteins. Hydrolyzes -Xaa-Yaa-Zaa-|-(S,diacylglyceryl)Cys-, in which Xaa is hydrophobic (preferably Leu), and Yaa (Ala or Ser) and Zaa (Gly or Ala) have small, neutral side chains.. The protein operates within protein modification; lipoprotein biosynthesis (signal peptide cleavage). This protein specifically catalyzes the removal of signal peptides from prolipoproteins. This Leptospira borgpetersenii serovar Hardjo-bovis (strain L550) protein is Lipoprotein signal peptidase.